We begin with the raw amino-acid sequence, 124 residues long: Small polypeptide ROTUNDIFOLIA LIKE 3 (124 aa).

Residues 1-25 (MEDERWKLSSSKGRSKSGRSCSSSS) are disordered. N-linked (GlcNAc...) asparagine glycans are attached at residues Asn35 and Asn38. Residues 59-75 (AWSAAGAGGGGASSSSS) form a helical membrane-spanning segment. Positions 60 to 95 (WSAAGAGGGGASSSSSSQHQHQQQQQQSNNSQRLSK) are disordered. Residues 71 to 91 (SSSSSSQHQHQQQQQQSNNSQ) show a composition bias toward low complexity. Asn88 carries an N-linked (GlcNAc...) asparagine glycan. The required for DVL/RTFL small polypeptide activity stretch occupies residues 92–124 (RLSKKCVEAVKEHRARFYIVRRCVSMLVCWRDY).

This sequence belongs to the DVL/RTFL small polypeptides family.

It localises to the cell membrane. Its function is as follows. Small polypeptide acting as a regulatory molecule which coordinates cellular responses required for differentiation, growth and development, probably by restricting polar cell proliferation in lateral organs (e.g. leaves and petioles). The polypeptide is Small polypeptide ROTUNDIFOLIA LIKE 3 (Oryza sativa subsp. indica (Rice)).